The sequence spans 130 residues: Succinate dehydrogenase assembly factor 3, mitochondrial (130 aa).

A mitochondrion-targeting transit peptide spans 1–8 (MRPSLLRL).

Belongs to the complex I LYR family. SDHAF3 subfamily. As to quaternary structure, interacts with the iron-sulfur protein subunit within the SDH catalytic dimer.

It localises to the mitochondrion matrix. Functionally, plays an essential role in the assembly of succinate dehydrogenase (SDH), an enzyme complex (also referred to as respiratory complex II) that is a component of both the tricarboxylic acid (TCA) cycle and the mitochondrial electron transport chain, and which couples the oxidation of succinate to fumarate with the reduction of ubiquinone (coenzyme Q) to ubiquinol. Promotes maturation of the iron-sulfur protein subunit of the SDH catalytic dimer, protecting it from the deleterious effects of oxidants. May act together with SDHAF1. The protein is Succinate dehydrogenase assembly factor 3, mitochondrial of Gibberella zeae (strain ATCC MYA-4620 / CBS 123657 / FGSC 9075 / NRRL 31084 / PH-1) (Wheat head blight fungus).